A 341-amino-acid polypeptide reads, in one-letter code: Delta(1)-pyrroline-2-carboxylate reductase (341 aa).

The active-site Charge relay system is the serine 47. The active-site Proton donor is the histidine 48. Arginine 52 serves as a coordination point for substrate. 120 to 124 lines the NADP(+) pocket; the sequence is HFSAL. A substrate-binding site is contributed by threonine 160. An NADP(+)-binding site is contributed by 178–180; the sequence is DFA. 186–187 contacts substrate; sequence RG. Glutamate 188 acts as the Charge relay system in catalysis. NADP(+)-binding positions include 229 to 230 and 305 to 311; these read HK and RLPSERR.

The protein belongs to the LDH2/MDH2 oxidoreductase family. In terms of assembly, homodimer.

The enzyme catalyses L-proline + NAD(+) = 1-pyrroline-2-carboxylate + NADH + H(+). It catalyses the reaction L-proline + NADP(+) = 1-pyrroline-2-carboxylate + NADPH + H(+). Functionally, catalyzes the reduction of Delta(1)-pyrroline-2-carboxylate (Pyr2C) to L-proline, using NADPH as the electron donor. Is likely involved in a degradation pathway that converts cis- and trans-3-hydroxy-L-proline (c3LHyp and t3LHyp) to L-proline, which would allow S.novella to grow on c3LHyp or t3LHyp as a sole carbon source. This chain is Delta(1)-pyrroline-2-carboxylate reductase, found in Ancylobacter novellus (strain ATCC 8093 / DSM 506 / JCM 20403 / CCM 1077 / IAM 12100 / NBRC 12443 / NCIMB 10456) (Starkeya novella).